We begin with the raw amino-acid sequence, 157 residues long: Ribosome maturation factor RimP (157 aa).

This sequence belongs to the RimP family.

Its subcellular location is the cytoplasm. In terms of biological role, required for maturation of 30S ribosomal subunits. In Thermosynechococcus vestitus (strain NIES-2133 / IAM M-273 / BP-1), this protein is Ribosome maturation factor RimP.